Consider the following 388-residue polypeptide: Alanine racemase (388 aa).

The active-site Proton acceptor; specific for D-alanine is lysine 39. Lysine 39 bears the N6-(pyridoxal phosphate)lysine mark. N6-carboxylysine is present on lysine 129. Arginine 136 lines the substrate pocket. Tyrosine 265 functions as the Proton acceptor; specific for L-alanine in the catalytic mechanism. Methionine 312 is a binding site for substrate.

The protein belongs to the alanine racemase family. In terms of assembly, homodimer. Pyridoxal 5'-phosphate serves as cofactor.

It carries out the reaction L-alanine = D-alanine. The protein operates within amino-acid biosynthesis; D-alanine biosynthesis; D-alanine from L-alanine: step 1/1. Inhibited by acetate and propionate. Irreversibly inhibited by cycloserine. Its function is as follows. Catalyzes the interconversion of L-alanine and D-alanine. Also weakly active on serine. This is Alanine racemase (alr) from Geobacillus stearothermophilus (Bacillus stearothermophilus).